Here is a 32-residue protein sequence, read N- to C-terminus: MAWTKPIIREIECGMEINMYGPDSDEEREVLF.

A cross-link (pyrroloquinoline quinone (Glu-Tyr)) is located at residues 16 to 20; it reads EINMY.

This sequence belongs to the PqqA family.

It participates in cofactor biosynthesis; pyrroloquinoline quinone biosynthesis. Its function is as follows. Required for coenzyme pyrroloquinoline quinone (PQQ) biosynthesis. PQQ is probably formed by cross-linking a specific glutamate to a specific tyrosine residue and excising these residues from the peptide. The sequence is that of Coenzyme PQQ synthesis protein A from Dinoroseobacter shibae (strain DSM 16493 / NCIMB 14021 / DFL 12).